Consider the following 257-residue polypeptide: S-methyl-5'-thioadenosine phosphorylase (257 aa).

Phosphate is bound by residues serine 10, arginine 50–histidine 51, and threonine 83–alanine 84. Methionine 180 is a binding site for substrate. Threonine 181 provides a ligand contact to phosphate. Aspartate 204–aspartate 206 contributes to the substrate binding site.

This sequence belongs to the PNP/MTAP phosphorylase family. MTAP subfamily. As to quaternary structure, homohexamer. Dimer of a homotrimer.

The catalysed reaction is S-methyl-5'-thioadenosine + phosphate = 5-(methylsulfanyl)-alpha-D-ribose 1-phosphate + adenine. It catalyses the reaction adenosine + phosphate = alpha-D-ribose 1-phosphate + adenine. It participates in amino-acid biosynthesis; L-methionine biosynthesis via salvage pathway; S-methyl-5-thio-alpha-D-ribose 1-phosphate from S-methyl-5'-thioadenosine (phosphorylase route): step 1/1. Catalyzes the reversible phosphorylation of S-methyl-5'-thioadenosine (MTA) to adenine and 5-methylthioribose-1-phosphate. Involved in the breakdown of MTA, a major by-product of polyamine biosynthesis. Responsible for the first step in the methionine salvage pathway after MTA has been generated from S-adenosylmethionine. Has broad substrate specificity with 6-aminopurine nucleosides as preferred substrates. Can also use adenosine as substrate to form ribose 1-phosphate. The polypeptide is S-methyl-5'-thioadenosine phosphorylase (Thermococcus kodakarensis (strain ATCC BAA-918 / JCM 12380 / KOD1) (Pyrococcus kodakaraensis (strain KOD1))).